Here is a 313-residue protein sequence, read N- to C-terminus: E3 ubiquitin-protein ligase RNF126 (313 aa).

Residue A2 is modified to N-acetylalanine. The residue at position 5 (S5) is a Phosphoserine. A required for interaction with BAG6 region spans residues 5–100 (SPQPGRYFCH…FEIPTFPPGA (96 aa)). Positions 13, 16, 29, and 32 each coordinate Zn(2+). A C4-type zinc finger spans residues 13–32 (CHCCSVEIVPRLPDYICPRC). Disordered stretches follow at residues 42-63 (EETR…QNRQ) and 95-128 (TFPP…RQPR). Polar residues predominate over residues 47-63 (TENGSAPSTAPTDQNRQ). The segment covering 103–116 (DDGRDPESRREREH) has biased composition (basic and acidic residues). Basic residues predominate over residues 117 to 128 (QSRHRYGARQPR). The interval 202–306 (TGPPPADKEK…SSSSSSSPSN (105 aa)) is sufficient for interaction with AICDA. Residues 231–272 (CPVCKEDYALGESVRQLPCNHLFHDSCIVPWLEQHDSCPVCR) form an RING-type zinc finger. Residues 279–313 (NTATNPPGLTGVGFSSSSSSSSSSSPSNENATSNS) form a disordered region. Over residues 293-313 (SSSSSSSSSSSPSNENATSNS) the composition is skewed to low complexity.

In terms of assembly, interacts with CCDC50, EGFR, FLT3 and SCAMP3. Interacts with BAG6 (via ubiquitin-like domain); required for BAG6-dependent ubiquitination of proteins mislocalized to the cytosol. Interacts with CDKN1A. Interacts with AICDA. In terms of processing, ubiquitinated. May undergo autoubiquitination. In terms of tissue distribution, detected in B-cells (at protein level).

The protein resides in the cytoplasm. It localises to the nucleus. The catalysed reaction is S-ubiquitinyl-[E2 ubiquitin-conjugating enzyme]-L-cysteine + [acceptor protein]-L-lysine = [E2 ubiquitin-conjugating enzyme]-L-cysteine + N(6)-ubiquitinyl-[acceptor protein]-L-lysine.. Its pathway is protein modification; protein ubiquitination. E3 ubiquitin-protein ligase that mediates ubiquitination oF target proteins. Depending on the associated E2 ligase, mediates 'Lys-27'-, 'Lys-29'-, 'Lys-48'- and/or 'Lys-63'-linked polyubiquitination of substrates. Part of a BAG6-dependent quality control process ensuring that proteins of the secretory pathway that are mislocalized to the cytosol are degraded by the proteasome. Probably acts by providing the ubiquitin ligase activity associated with the BAG6 complex and be responsible for ubiquitination of the hydrophobic mislocalized proteins and their targeting to the proteasome. May also play a role in the endosomal recycling of IGF2R, the cation-independent mannose-6-phosphate receptor. May play a role in the endosomal sorting and degradation of several membrane receptors including EGFR, FLT3, MET and CXCR4, by mediating their ubiquitination. By ubiquitinating CDKN1A/p21 and targeting it for degradation, may also promote cell proliferation. May monoubiquitinate AICDA. Acts as a regulator of DNA repair by mediating 'Lys-27'- and 'Lys-29'-linked polyubiquitination of MRE11, thereby promoting the exonuclease activity of MRE11. This is E3 ubiquitin-protein ligase RNF126 from Mus musculus (Mouse).